Reading from the N-terminus, the 433-residue chain is PC-esterase domain-containing protein 1B (433 aa).

The disordered stretch occupies residues 386–433 (PPCHQRQAPVVHRGFPRHFARGPYSNPWRDRPRRPPKHSPAGLESRPQ).

The protein belongs to the PC-esterase family.

The polypeptide is PC-esterase domain-containing protein 1B (Pced1b) (Mus musculus (Mouse)).